The sequence spans 248 residues: 2,3-bisphosphoglycerate-dependent phosphoglycerate mutase (248 aa).

Substrate contacts are provided by residues 8–15 (RHGESTWN), 21–22 (TG), arginine 60, 87–90 (ERHY), lysine 98, 114–115 (RR), and 183–184 (GN). Histidine 9 serves as the catalytic Tele-phosphohistidine intermediate. The Proton donor/acceptor role is filled by glutamate 87.

Belongs to the phosphoglycerate mutase family. BPG-dependent PGAM subfamily. As to quaternary structure, homodimer.

It catalyses the reaction (2R)-2-phosphoglycerate = (2R)-3-phosphoglycerate. Its pathway is carbohydrate degradation; glycolysis; pyruvate from D-glyceraldehyde 3-phosphate: step 3/5. Functionally, catalyzes the interconversion of 2-phosphoglycerate and 3-phosphoglycerate. The polypeptide is 2,3-bisphosphoglycerate-dependent phosphoglycerate mutase (Burkholderia vietnamiensis (strain G4 / LMG 22486) (Burkholderia cepacia (strain R1808))).